We begin with the raw amino-acid sequence, 518 residues long: Vesicular inhibitory amino acid transporter (518 aa).

Residues 1–125 are Cytoplasmic-facing; it reads MATLIRSKLS…WNVTNAIQGM (125 aa). A disordered region spans residues 66–98; that stretch reads EVPSGDPTAEGDSHYQRDGTGPPSSASKDEGLC. Residues 126–146 form a helical membrane-spanning segment; sequence FVLGLPYAILHGGYLGLFLII. The Lumenal, vesicle segment spans residues 147–197; sequence FAAVVCCYTGKILIACLYEENEDGETVRVRDSYVDIANACCAPRFPKLGGR. A helical membrane pass occupies residues 198 to 218; it reads VVNVAQIIELVMTCILYVVVS. Over 219-258 the chain is Cytoplasmic; sequence GNLMYNSFPSLPISQKSWSIIATAMLLPCAFLKNLKAVSK. The chain crosses the membrane as a helical span at residues 259 to 279; the sequence is FSLLCTLAHFVINVLVIAYCL. Residues 280–298 lie on the Lumenal, vesicle side of the membrane; the sequence is SRARDWAWDKVKFYIDVKK. The chain crosses the membrane as a helical span at residues 299-319; that stretch reads FPISIGIIVFSYTSQIFLPSL. The Cytoplasmic portion of the chain corresponds to 320-334; the sequence is EGNMQSPKEFHCMMN. Residues 335-355 form a helical membrane-spanning segment; sequence WTHIAACILKGLFALVAYLTW. Over 356-376 the chain is Lumenal, vesicle; sequence ADETKEVITDNLPSTIRAVVN. Residues 377-397 traverse the membrane as a helical segment; the sequence is LFLVAKALLSYPLPFFAAVEV. The Cytoplasmic segment spans residues 398–431; it reads LEKSLFQEGARAFFPNCYGGDGRLKSWGLTLRCA. Residues 432–452 traverse the membrane as a helical segment; it reads LVVFTLLMAIYVPHFALLMGL. At 453 to 454 the chain is on the lumenal, vesicle side; it reads TG. A helical membrane pass occupies residues 455 to 475; that stretch reads SLTGAGLCFLLPSLFHLKLLW. At 476 to 482 the chain is on the cytoplasmic side; sequence RKLQWHQ. A helical transmembrane segment spans residues 483–503; it reads VFFDVSIFVIGSICSVSGFVH. Residues 504-518 are Lumenal, vesicle-facing; sequence SLEGLIEAFRFNIED.

Belongs to the amino acid/polyamine transporter 2 family.

It localises to the cytoplasmic vesicle membrane. The protein localises to the presynapse. It catalyses the reaction 4-aminobutanoate(out) + n H(+)(in) = 4-aminobutanoate(in) + n H(+)(out). It carries out the reaction glycine(out) + n H(+)(in) = glycine(in) + n H(+)(out). The enzyme catalyses beta-alanine(out) + n H(+)(in) = beta-alanine(in) + n H(+)(out). Functionally, antiporter that exchanges vesicular protons for cytosolic 4-aminobutanoate or to a lesser extend glycine, thus allowing their secretion from nerve terminals. The transport is equally dependent on the chemical and electrical components of the proton gradient. May also transport beta-alanine. Acidification of GABAergic synaptic vesicles is a prerequisite for 4-aminobutanoate uptake. The sequence is that of Vesicular inhibitory amino acid transporter from Xenopus tropicalis (Western clawed frog).